A 649-amino-acid chain; its full sequence is Alpha-amylase (649 aa).

The active-site Nucleophile is the Glu124. The active-site Proton donor is Asp215.

Belongs to the glycosyl hydrolase 57 family. In terms of assembly, homodimer.

It carries out the reaction Endohydrolysis of (1-&gt;4)-alpha-D-glucosidic linkages in polysaccharides containing three or more (1-&gt;4)-alpha-linked D-glucose units.. In terms of biological role, displays a broad range of substrate specificity, with the capacity to hydrolyze carbohydrates as simple as maltotriose. This chain is Alpha-amylase (amyA), found in Pyrococcus furiosus (strain ATCC 43587 / DSM 3638 / JCM 8422 / Vc1).